The chain runs to 436 residues: Bystin (436 aa).

The tract at residues 1-105 is disordered; that stretch reads MPKLKVTRGA…GSDEEDEEWP (105 aa). The residue at position 54 (S54) is a Phosphoserine. Residues 70-86 are compositionally biased toward basic and acidic residues; that stretch reads TEHATGDRPAKPRERAT. The segment covering 96–105 has biased composition (acidic residues); it reads GSDEEDEEWP. Position 97 is a phosphoserine (S97). Phosphothreonine is present on T155. 2 positions are modified to phosphoserine: S166 and S413.

Belongs to the bystin family. As to quaternary structure, binds trophinin, tastin and cytokeratins.

It is found in the cytoplasm. The protein localises to the nucleus. The protein resides in the nucleolus. Required for processing of 20S pre-rRNA precursor and biogenesis of 40S ribosomal subunits. This is Bystin from Rattus norvegicus (Rat).